The following is a 208-amino-acid chain: Large ribosomal subunit protein uL4 (208 aa).

A disordered region spans residues 49–78 (KAKGISDISGTTAKPYRQKHTGRARQGSLR).

It belongs to the universal ribosomal protein uL4 family. Part of the 50S ribosomal subunit.

Its function is as follows. One of the primary rRNA binding proteins, this protein initially binds near the 5'-end of the 23S rRNA. It is important during the early stages of 50S assembly. It makes multiple contacts with different domains of the 23S rRNA in the assembled 50S subunit and ribosome. Forms part of the polypeptide exit tunnel. The protein is Large ribosomal subunit protein uL4 of Anaplasma phagocytophilum (strain HZ).